Reading from the N-terminus, the 279-residue chain is Pantothenate synthetase (279 aa).

31-38 (MGALHEGH) lines the ATP pocket. The Proton donor role is filled by His38. Residue Gln62 coordinates (R)-pantoate. Beta-alanine is bound at residue Gln62. 148–151 (GEKD) is a binding site for ATP. Residue Gln154 participates in (R)-pantoate binding. ATP contacts are provided by residues Val177 and 185-188 (LSSR).

It belongs to the pantothenate synthetase family. In terms of assembly, homodimer.

The protein localises to the cytoplasm. The catalysed reaction is (R)-pantoate + beta-alanine + ATP = (R)-pantothenate + AMP + diphosphate + H(+). It participates in cofactor biosynthesis; (R)-pantothenate biosynthesis; (R)-pantothenate from (R)-pantoate and beta-alanine: step 1/1. Its function is as follows. Catalyzes the condensation of pantoate with beta-alanine in an ATP-dependent reaction via a pantoyl-adenylate intermediate. The chain is Pantothenate synthetase from Cereibacter sphaeroides (strain ATCC 17029 / ATH 2.4.9) (Rhodobacter sphaeroides).